The chain runs to 92 residues: Small ribosomal subunit protein uS19c (92 aa).

This sequence belongs to the universal ribosomal protein uS19 family.

The protein localises to the plastid. The protein resides in the chloroplast. Protein S19 forms a complex with S13 that binds strongly to the 16S ribosomal RNA. This Nephroselmis olivacea (Green alga) protein is Small ribosomal subunit protein uS19c.